Consider the following 113-residue polypeptide: Holo-[acyl-carrier-protein] synthase (113 aa).

Mg(2+) is bound by residues aspartate 5 and glutamate 50.

It belongs to the P-Pant transferase superfamily. AcpS family. The cofactor is Mg(2+).

Its subcellular location is the cytoplasm. It catalyses the reaction apo-[ACP] + CoA = holo-[ACP] + adenosine 3',5'-bisphosphate + H(+). In terms of biological role, transfers the 4'-phosphopantetheine moiety from coenzyme A to a Ser of acyl-carrier-protein. This chain is Holo-[acyl-carrier-protein] synthase, found in Nautilia profundicola (strain ATCC BAA-1463 / DSM 18972 / AmH).